The sequence spans 635 residues: Biosynthetic arginine decarboxylase (635 aa).

Lysine 100 carries the post-translational modification N6-(pyridoxal phosphate)lysine. 282–292 contacts substrate; sequence VDIGGGLGVDY.

It belongs to the Orn/Lys/Arg decarboxylase class-II family. SpeA subfamily. It depends on Mg(2+) as a cofactor. Pyridoxal 5'-phosphate serves as cofactor.

It catalyses the reaction L-arginine + H(+) = agmatine + CO2. The protein operates within amine and polyamine biosynthesis; agmatine biosynthesis; agmatine from L-arginine: step 1/1. Its function is as follows. Catalyzes the biosynthesis of agmatine from arginine. This chain is Biosynthetic arginine decarboxylase, found in Geotalea daltonii (strain DSM 22248 / JCM 15807 / FRC-32) (Geobacter daltonii).